The sequence spans 689 residues: Ataxin-1-like (689 aa).

A compositionally biased stretch (basic and acidic residues) spans 1-19; that stretch reads MKPVHERSQECLPPKKRDL. Disordered stretches follow at residues 1–46, 185–223, and 242–297; these read MKPV…SEWS, ATPPPQAPSPAHSFNKAPSATSPSGQLPHHSSTQPLDLA, and LHET…GEGQ. The interval 20–197 is interaction with NCOR2 and ATXN1; it reads PVTSEDMGRT…PPQAPSPAHS (178 aa). Residues 20–197 form a self-association region; the sequence is PVTSEDMGRT…PPQAPSPAHS (178 aa). 2 stretches are compositionally biased toward polar residues: residues 28–43 and 200–219; these read RTTSCSTNHTPSSDAS and KAPSATSPSGQLPHHSSTQP. Residues 257 to 268 show a composition bias toward low complexity; it reads QESQSALEAAAA. A compositionally biased stretch (basic and acidic residues) spans 273-285; that stretch reads RPRERNLVRRESE. Residue S284 is modified to Phosphoserine. T330 is subject to Phosphothreonine. The disordered stretch occupies residues 357 to 405; it reads KEEPSPLNLSHHTPDHQGEGRGSARNPAELAEKSQARGFYPQSHQEPVK. At S361 the chain carries Phosphoserine. The 132-residue stretch at 457–588 folds into the AXH domain; it reads PPPITSSHLP…SISLQSLNSN (132 aa). S615 is subject to Phosphoserine. A disordered region spans residues 617-647; sequence ELCDSEGKSQPAGEGSRVVEPSQPESGAQAC.

This sequence belongs to the ATXN1 family. In terms of assembly, homodimer. Interacts with CIC. Interacts (via AXH domain) with NCOR2. Interacts with ATXN1. Directly interacts with RBPJ; this interaction is disrupted in the presence of Notch intracellular domain. Competes with ATXN1 for RBPJ-binding. Found in a complex with CIC and ATXN1. Expressed in cerebellum and cerebral cortex.

It localises to the nucleus. The protein resides in the cell projection. Its subcellular location is the dendrite. In terms of biological role, chromatin-binding factor that repress Notch signaling in the absence of Notch intracellular domain by acting as a CBF1 corepressor. Binds to the HEY promoter and might assist, along with NCOR2, RBPJ-mediated repression. Can suppress ATXN1 cytotoxicity in spinocerebellar ataxia type 1 (SCA1). In concert with CIC and ATXN1, involved in brain development. This Homo sapiens (Human) protein is Ataxin-1-like (ATXN1L).